The chain runs to 232 residues: Ion-translocating oxidoreductase complex subunit E (232 aa).

6 helical membrane passes run 18–38 (GLVQ…ITNA), 39–59 (LGLG…VSLV), 69–89 (IPVF…LINA), 93–113 (GLYL…IIIG), 127–147 (AAFD…VLGA), and 182–202 (PFLL…LIAL).

The protein belongs to the NqrDE/RnfAE family. As to quaternary structure, the complex is composed of six subunits: RnfA, RnfB, RnfC, RnfD, RnfE and RnfG.

It is found in the cell inner membrane. Functionally, part of a membrane-bound complex that couples electron transfer with translocation of ions across the membrane. This Shewanella baltica (strain OS185) protein is Ion-translocating oxidoreductase complex subunit E.